The chain runs to 275 residues: 2,3,4,5-tetrahydropyridine-2,6-dicarboxylate N-succinyltransferase (275 aa).

The protein belongs to the transferase hexapeptide repeat family.

Its subcellular location is the cytoplasm. The enzyme catalyses (S)-2,3,4,5-tetrahydrodipicolinate + succinyl-CoA + H2O = (S)-2-succinylamino-6-oxoheptanedioate + CoA. The protein operates within amino-acid biosynthesis; L-lysine biosynthesis via DAP pathway; LL-2,6-diaminopimelate from (S)-tetrahydrodipicolinate (succinylase route): step 1/3. This Paraburkholderia phymatum (strain DSM 17167 / CIP 108236 / LMG 21445 / STM815) (Burkholderia phymatum) protein is 2,3,4,5-tetrahydropyridine-2,6-dicarboxylate N-succinyltransferase.